Here is an 88-residue protein sequence, read N- to C-terminus: uncharacterized protein (88 aa).

It localises to the host cytoplasm. This is an uncharacterized protein from Escherichia phage Mu (Bacteriophage Mu).